Here is a 276-residue protein sequence, read N- to C-terminus: Outer plastidial membrane protein porin (276 aa).

Belongs to the eukaryotic mitochondrial porin (TC 1.B.8.1) family.

It localises to the plastid outer membrane. Forms a channel through the cell membrane that allows diffusion of small hydrophilic molecules. The channel adopts an open conformation at low or zero membrane potential and a closed conformation at potentials above 30-40 mV. The open state has a weak anion selectivity whereas the closed state is cation-selective. This Pisum sativum (Garden pea) protein is Outer plastidial membrane protein porin (POR1).